A 468-amino-acid polypeptide reads, in one-letter code: Cell division protein FtsA (468 aa).

The interval 416-468 (NKKDTHENEVESSDEEIYQSEDNHQEHKQNHEHVQDKDKEESKFKKLMKSLFE) is disordered. Residues 425–434 (VESSDEEIYQ) are compositionally biased toward acidic residues. Residues 436 to 459 (EDNHQEHKQNHEHVQDKDKEESKF) are compositionally biased toward basic and acidic residues.

The protein belongs to the FtsA/MreB family. As to quaternary structure, self-interacts. Interacts with FtsZ.

The protein resides in the cell membrane. In terms of biological role, cell division protein that is involved in the assembly of the Z ring. May serve as a membrane anchor for the Z ring. The polypeptide is Cell division protein FtsA (Staphylococcus aureus (strain MRSA252)).